Reading from the N-terminus, the 239-residue chain is tRNA (guanine-N(7)-)-methyltransferase (239 aa).

4 residues coordinate S-adenosyl-L-methionine: E69, E94, D121, and D144. D144 is a catalytic residue. K148 serves as a coordination point for substrate. The segment at 150-155 is interaction with RNA; the sequence is RHNKRR. Residues D180 and 217-220 each bind substrate; that span reads TKFE.

Belongs to the class I-like SAM-binding methyltransferase superfamily. TrmB family. In terms of assembly, monomer.

The catalysed reaction is guanosine(46) in tRNA + S-adenosyl-L-methionine = N(7)-methylguanosine(46) in tRNA + S-adenosyl-L-homocysteine. It participates in tRNA modification; N(7)-methylguanine-tRNA biosynthesis. In terms of biological role, catalyzes the formation of N(7)-methylguanine at position 46 (m7G46) in tRNA. This is tRNA (guanine-N(7)-)-methyltransferase from Shigella flexneri serotype 5b (strain 8401).